The primary structure comprises 268 residues: Secreted RxLR effector protein 32 (268 aa).

A signal peptide spans 1-21 (MRGAYYVAFALLVAASTRTAA). The RxLR-dEER signature appears at 50–71 (RILRESPDPKDRLPVYASDEER). The interval 120 to 257 (PKLEIKKSKR…PTPESLGIGG (138 aa)) is disordered. The segment covering 148-161 (SNSKKSLVSSASAK) has biased composition (low complexity). Residues 212 to 224 (NLDKNKRPDEAKI) show a composition bias toward basic and acidic residues.

This sequence belongs to the RxLR effector family.

The protein resides in the secreted. Its subcellular location is the host cell. Secreted effector that completely suppresses the host cell death induced by cell death-inducing proteins. The sequence is that of Secreted RxLR effector protein 32 from Plasmopara viticola (Downy mildew of grapevine).